The sequence spans 147 residues: UPF0306 protein YhbP (147 aa).

The protein belongs to the UPF0306 family.

The chain is UPF0306 protein YhbP from Salmonella schwarzengrund (strain CVM19633).